The following is a 51-amino-acid chain: Insulin-1 (51 aa).

Disulfide bonds link C8–C37, C20–C50, and C36–C41.

The protein belongs to the insulin family. Heterodimer of a B chain and an A chain linked by two disulfide bonds.

The protein resides in the secreted. Insulin decreases blood glucose concentration. It increases cell permeability to monosaccharides, amino acids and fatty acids. It accelerates glycolysis, the pentose phosphate cycle, and glycogen synthesis in liver. This chain is Insulin-1 (ins1), found in Batrachoididae sp. (Toadfish).